The following is a 274-amino-acid chain: Subtilisin DY (274 aa).

Gln-2 is a binding site for Ca(2+). The Peptidase S8 domain maps to 5–273 (PYGIPLIKAD…KGLINVEAAA (269 aa)). The active-site Charge relay system is the Asp-32. Asp-41 contacts Ca(2+). His-63 serves as the catalytic Charge relay system. The Ca(2+) site is built by Leu-74, Asn-76, Val-80, Ala-168, Tyr-170, and Val-173. Ser-220 (charge relay system) is an active-site residue.

This sequence belongs to the peptidase S8 family. Ca(2+) is required as a cofactor.

The protein localises to the secreted. The enzyme catalyses Hydrolysis of proteins with broad specificity for peptide bonds, and a preference for a large uncharged residue in P1. Hydrolyzes peptide amides.. Subtilisin is an extracellular alkaline serine protease, it catalyzes the hydrolysis of proteins and peptide amides. This Bacillus licheniformis protein is Subtilisin DY (apr).